A 455-amino-acid chain; its full sequence is Chromosomal replication initiator protein DnaA 2 (455 aa).

The domain I, interacts with DnaA modulators stretch occupies residues 1–95; sequence MLTCNDCSTW…KRSSPQIAAS (95 aa). The tract at residues 96 to 112 is domain II; sequence VTKPAVEVSEENKDFQL. Residues 113 to 328 form a domain III, AAA+ region region; sequence KLNGAYRFDN…GAINKLTAYC (216 aa). Residues Gly-157, Gly-159, Lys-160, and Thr-161 each contribute to the ATP site. A domain IV, binds dsDNA region spans residues 329–455; it reads LLFNKPLTET…IAIDSPQHFV (127 aa).

Belongs to the DnaA family. Oligomerizes as a right-handed, spiral filament on DNA at oriC.

The protein localises to the cytoplasm. In terms of biological role, plays an essential role in the initiation and regulation of chromosomal replication. ATP-DnaA binds to the origin of replication (oriC) to initiate formation of the DNA replication initiation complex once per cell cycle. Binds the DnaA box (a 9 base pair repeat at the origin) and separates the double-stranded (ds)DNA. Forms a right-handed helical filament on oriC DNA; dsDNA binds to the exterior of the filament while single-stranded (ss)DNA is stabiized in the filament's interior. The ATP-DnaA-oriC complex binds and stabilizes one strand of the AT-rich DNA unwinding element (DUE), permitting loading of DNA polymerase. After initiation quickly degrades to an ADP-DnaA complex that is not apt for DNA replication. Binds acidic phospholipids. This chain is Chromosomal replication initiator protein DnaA 2, found in Chlamydia muridarum (strain MoPn / Nigg).